Here is a 288-residue protein sequence, read N- to C-terminus: Homoserine kinase (288 aa).

78-88 is a binding site for ATP; sequence PLARGLGSSSS.

Belongs to the GHMP kinase family. Homoserine kinase subfamily.

The protein resides in the cytoplasm. It catalyses the reaction L-homoserine + ATP = O-phospho-L-homoserine + ADP + H(+). Its pathway is amino-acid biosynthesis; L-threonine biosynthesis; L-threonine from L-aspartate: step 4/5. In terms of biological role, catalyzes the ATP-dependent phosphorylation of L-homoserine to L-homoserine phosphate. This is Homoserine kinase from Streptococcus mutans serotype c (strain ATCC 700610 / UA159).